Consider the following 469-residue polypeptide: UDP-glycosyltransferase 75B1 (469 aa).

Histidine 16 (proton acceptor) is an active-site residue. Histidine 16 lines the an anthocyanidin pocket. Glutamine 334, histidine 349, tryptophan 352, serine 354, glutamate 357, aspartate 373, and glutamine 374 together coordinate UDP-alpha-D-glucose.

This sequence belongs to the UDP-glycosyltransferase family. Interacts with CALS1, ROP1 and phragmoplastin.

Its subcellular location is the cytoplasm. It is found in the perinuclear region. The protein localises to the cytoskeleton. It localises to the phragmoplast. It catalyses the reaction (indol-3-yl)acetate + UDP-alpha-D-glucose = 1-O-(indol-3-ylacetyl)-beta-D-glucose + UDP. The protein operates within plant hormone metabolism; auxin conjugation. Functionally, possesses low catalytic activity on indole-3-acetic acid (IAA) in vitro. May transfer UDP-glucose from sucrose synthase to callose synthase for the synthesis of callose at the forming cell plate during cytokinesis. Has high affinity for 4-aminobenzoate. Catalyzes the formation of 4-aminobenzoate glucose ester which represents a storage form of 4-aminobenzoate in the vacuole. Is the major source of this activity in the plant. Also active in vitro on benzoates and benzoate derivatives. The polypeptide is UDP-glycosyltransferase 75B1 (UGT75B1) (Arabidopsis thaliana (Mouse-ear cress)).